The sequence spans 100 residues: uncharacterized protein (100 aa).

Transmembrane regions (helical) follow at residues 30–50 (FHIP…PLAF) and 69–89 (FLLI…LPFF).

It is found in the cytoplasm. The protein localises to the nucleus membrane. This is an uncharacterized protein from Schizosaccharomyces pombe (strain 972 / ATCC 24843) (Fission yeast).